The primary structure comprises 330 residues: tRNA U34 carboxymethyltransferase (330 aa).

Carboxy-S-adenosyl-L-methionine is bound by residues Lys91, Trp105, Lys110, Gly130, 152–154 (DPS), 181–182 (IE), Met196, Tyr200, and Arg315.

The protein belongs to the class I-like SAM-binding methyltransferase superfamily. CmoB family. As to quaternary structure, homotetramer.

The enzyme catalyses carboxy-S-adenosyl-L-methionine + 5-hydroxyuridine(34) in tRNA = 5-carboxymethoxyuridine(34) in tRNA + S-adenosyl-L-homocysteine + H(+). In terms of biological role, catalyzes carboxymethyl transfer from carboxy-S-adenosyl-L-methionine (Cx-SAM) to 5-hydroxyuridine (ho5U) to form 5-carboxymethoxyuridine (cmo5U) at position 34 in tRNAs. This Shewanella denitrificans (strain OS217 / ATCC BAA-1090 / DSM 15013) protein is tRNA U34 carboxymethyltransferase.